The sequence spans 342 residues: Phosphate acyltransferase (342 aa).

The protein belongs to the PlsX family. As to quaternary structure, homodimer. Probably interacts with PlsY.

The protein resides in the cytoplasm. The enzyme catalyses a fatty acyl-[ACP] + phosphate = an acyl phosphate + holo-[ACP]. The protein operates within lipid metabolism; phospholipid metabolism. Its function is as follows. Catalyzes the reversible formation of acyl-phosphate (acyl-PO(4)) from acyl-[acyl-carrier-protein] (acyl-ACP). This enzyme utilizes acyl-ACP as fatty acyl donor, but not acyl-CoA. In Trichormus variabilis (strain ATCC 29413 / PCC 7937) (Anabaena variabilis), this protein is Phosphate acyltransferase.